The sequence spans 225 residues: Transmembrane emp24 domain-containing protein p24delta11 (225 aa).

Residues 1-35 form the signal peptide; sequence MDLLPSRYKIHKTKLRWILTMMTMMMMMVMRRGES. The Lumenal segment spans residues 36–193; sequence MRLDMESGNT…ELNRSTNSRM (158 aa). A GOLD domain is found at 45–160; sequence TKCISDDIKT…ITMLEVEVRK (116 aa). Residues 175–188 adopt a coiled-coil conformation; the sequence is LIEREREMQELNRS. At Arg-178 the chain carries Omega-N-methylated arginine. The N-linked (GlcNAc...) asparagine glycan is linked to Asn-186. The chain crosses the membrane as a helical span at residues 194–210; the sequence is AALSLLSFVVTMSVAGL. Topologically, residues 211–225 are cytoplasmic; it reads QLRHLKSFLERKKLL. The COPII vesicle coat-binding motif lies at 218-219; that stretch reads FL. The COPI vesicle coat-binding signature appears at 218–225; it reads FLERKKLL.

The protein belongs to the EMP24/GP25L family. As to quaternary structure, probably oligomerizes with other members of the EMP24/GP25L family. Associates with the COPI vesicle coat (coatomer). Associates with the COPII vesicle coat (coatomer).

Its subcellular location is the endoplasmic reticulum membrane. It localises to the golgi apparatus. The protein resides in the cis-Golgi network membrane. The protein localises to the golgi stack membrane. Its function is as follows. Involved in vesicular protein trafficking. Mainly functions in the early secretory pathway. Thought to act as cargo receptor at the lumenal side for incorporation of secretory cargo molecules into transport vesicles and to be involved in vesicle coat formation at the cytoplasmic side. The polypeptide is Transmembrane emp24 domain-containing protein p24delta11 (Arabidopsis thaliana (Mouse-ear cress)).